The primary structure comprises 307 residues: Elongation factor Ts (307 aa).

Positions 80 to 83 (TDFV) are involved in Mg(2+) ion dislocation from EF-Tu.

It belongs to the EF-Ts family.

The protein localises to the cytoplasm. Its function is as follows. Associates with the EF-Tu.GDP complex and induces the exchange of GDP to GTP. It remains bound to the aminoacyl-tRNA.EF-Tu.GTP complex up to the GTP hydrolysis stage on the ribosome. This Clostridium botulinum (strain 657 / Type Ba4) protein is Elongation factor Ts.